We begin with the raw amino-acid sequence, 243 residues long: Biosynthetic peptidoglycan transglycosylase (243 aa).

The chain crosses the membrane as a helical span at residues 21 to 43 (LLIVSLVSALMSVLQVIVFRFVD).

It belongs to the glycosyltransferase 51 family.

The protein resides in the cell inner membrane. It carries out the reaction [GlcNAc-(1-&gt;4)-Mur2Ac(oyl-L-Ala-gamma-D-Glu-L-Lys-D-Ala-D-Ala)](n)-di-trans,octa-cis-undecaprenyl diphosphate + beta-D-GlcNAc-(1-&gt;4)-Mur2Ac(oyl-L-Ala-gamma-D-Glu-L-Lys-D-Ala-D-Ala)-di-trans,octa-cis-undecaprenyl diphosphate = [GlcNAc-(1-&gt;4)-Mur2Ac(oyl-L-Ala-gamma-D-Glu-L-Lys-D-Ala-D-Ala)](n+1)-di-trans,octa-cis-undecaprenyl diphosphate + di-trans,octa-cis-undecaprenyl diphosphate + H(+). Its pathway is cell wall biogenesis; peptidoglycan biosynthesis. Functionally, peptidoglycan polymerase that catalyzes glycan chain elongation from lipid-linked precursors. The polypeptide is Biosynthetic peptidoglycan transglycosylase (Xylella fastidiosa (strain M12)).